The primary structure comprises 1010 residues: DENN domain-containing protein 1A (1010 aa).

The region spanning 13–143 is the uDENN domain; that stretch reads FEVYIEVNRP…HGHPIPEPGT (131 aa). Residues 160-296 form the cDENN domain; it reads ELPSIPENRN…VVSALKNRIR (137 aa). Positions 298-375 constitute a dDENN domain; that stretch reads MSTTTGDGVA…DGRLDLLNSG (78 aa). The FXDXF motif motif lies at 378–382; it reads FSDVF. The segment at 455–554 is disordered; that stretch reads GFSTATEEPL…EATVKEPQST (100 aa). A compositionally biased stretch (basic and acidic residues) spans 472 to 482; that stretch reads IEKKRGEERRP. A compositionally biased stretch (basic residues) spans 493–502; that stretch reads PRPHVPRRPK. Residues 509-524 are compositionally biased toward polar residues; that stretch reads SRTTAGSSPDQPQQYR. Residues 538 to 548 show a composition bias toward basic and acidic residues; that stretch reads SPEKDSSEATV. The Clathrin box motif lies at 560–569; sequence SLLEDIFSNL.

The protein resides in the cytoplasmic vesicle. The protein localises to the clathrin-coated vesicle membrane. Its subcellular location is the presynaptic cell membrane. Functionally, guanine nucleotide exchange factor (GEF) regulating clathrin-mediated endocytosis through RAB35 activation. Promotes the exchange of GDP to GTP, converting inactive GDP-bound RAB35 into its active GTP-bound form. Regulates clathrin-mediated endocytosis of synaptic vesicles and mediates exit from early endosomes. Binds phosphatidylinositol-phosphates (PtdInsPs), with some preference for PtdIns(3)P. The polypeptide is DENN domain-containing protein 1A (dennd1a) (Xenopus laevis (African clawed frog)).